Here is an 894-residue protein sequence, read N- to C-terminus: Phosphoenolpyruvate carboxylase (894 aa).

Catalysis depends on residues H143 and K556.

This sequence belongs to the PEPCase type 1 family. Requires Mg(2+) as cofactor.

It carries out the reaction oxaloacetate + phosphate = phosphoenolpyruvate + hydrogencarbonate. In terms of biological role, forms oxaloacetate, a four-carbon dicarboxylic acid source for the tricarboxylic acid cycle. This Acinetobacter baylyi (strain ATCC 33305 / BD413 / ADP1) protein is Phosphoenolpyruvate carboxylase.